The following is a 268-amino-acid chain: Diaminopimelate epimerase (268 aa).

Substrate-binding residues include Asn13, Gln46, and Asn64. Cys73 functions as the Proton donor in the catalytic mechanism. Residues 74 to 75 (GN), Asn148, Asn181, and 199 to 200 (ER) contribute to the substrate site. Cys208 acts as the Proton acceptor in catalysis. 209-210 (GT) lines the substrate pocket.

Belongs to the diaminopimelate epimerase family. Homodimer.

The protein localises to the cytoplasm. The catalysed reaction is (2S,6S)-2,6-diaminopimelate = meso-2,6-diaminopimelate. Its pathway is amino-acid biosynthesis; L-lysine biosynthesis via DAP pathway; DL-2,6-diaminopimelate from LL-2,6-diaminopimelate: step 1/1. Its function is as follows. Catalyzes the stereoinversion of LL-2,6-diaminopimelate (L,L-DAP) to meso-diaminopimelate (meso-DAP), a precursor of L-lysine and an essential component of the bacterial peptidoglycan. The protein is Diaminopimelate epimerase of Sphingopyxis alaskensis (strain DSM 13593 / LMG 18877 / RB2256) (Sphingomonas alaskensis).